The primary structure comprises 376 residues: UPF0754 membrane protein SSP0953 (376 aa).

The next 2 helical transmembrane spans lie at 4–24 and 356–376; these read FLVI…TNVI and FLGF…AIFV.

This sequence belongs to the UPF0754 family.

It localises to the cell membrane. The sequence is that of UPF0754 membrane protein SSP0953 from Staphylococcus saprophyticus subsp. saprophyticus (strain ATCC 15305 / DSM 20229 / NCIMB 8711 / NCTC 7292 / S-41).